The following is a 574-amino-acid chain: MDADSINSFFLIGALLAAVSVLLSPVSSRLGIPILLIFLAVGILAGEDGPGGILFDDYSTAYLVSNLALAIILLDGGMRTRVASFRVALWPALSLATFGVAITTSITGVMAAWLFDLHWLQGLLVGAIVGSTDAAAVFSLLKGRSLNERVGATLEIESGSNDPMAVFLTVTLIAILGNVDAELSASFMLISFIKQFGLGIFLGLGGGWLLWKLVNLSKLAEGLYSILVLSGGLMIYAASNKLGGSGILSIYLVGLFLGNKPTRGRHSILNVLDGMTWVSQIGMFLVLGLLLTPSDLLDIWLPGLALAFGMILFARPLAVWLSLLPFKSFSSRDRWFISWVGLRGAVPIILAVFPMMAGLPGAQLYFNLAFFVVLVSLLVQGASLTTAARLAKVELPPKPLPISRSGVEIYPSSEWEVFVYRLSENKWCIGEPLKRLSMPDGTRIAAVFRHNTLLHPSGSTCLEAGDILCVLGQEKSLEALSNLFSQAPETKEVPRFFGDFFIDTEVKLLDLAPIYGLELDEATGDMTVADLVAAELGSHPVLGDQFLWQSLHWVVAGLYEGKVTNVGIRLPAEA.

Helical transmembrane passes span 6–26, 34–54, 58–78, 87–107, 109–129, 173–193, 196–216, 219–239, 242–262, 271–291, 299–319, 335–355, and 359–379; these read INSFFLIGALLAAVSVLLSPV, ILLIFLAVGILAGEDGPGGIL, YSTAYLVSNLALAIILLDGGM, VALWPALSLATFGVAITTSIT, VMAAWLFDLHWLQGLLVGAIV, IAILGNVDAELSASFMLISFI, FGLGIFLGLGGGWLLWKLVNL, LAEGLYSILVLSGGLMIYAAS, LGGSGILSIYLVGLFLGNKPT, VLDGMTWVSQIGMFLVLGLLL, IWLPGLALAFGMILFARPLAV, WFISWVGLRGAVPIILAVFPM, and LPGAQLYFNLAFFVVLVSLLV. The region spanning 405-486 is the RCK C-terminal domain; that stretch reads SGVEIYPSSE…LEALSNLFSQ (82 aa).

The protein belongs to the monovalent cation:proton antiporter 1 (CPA1) transporter (TC 2.A.36) family. NhaP2 subfamily.

It is found in the cell inner membrane. The catalysed reaction is K(+)(in) + H(+)(out) = K(+)(out) + H(+)(in). Its function is as follows. K(+)/H(+) antiporter that extrudes potassium in exchange for external protons and maintains the internal concentration of potassium under toxic levels. This chain is K(+)/H(+) antiporter NhaP2, found in Shewanella sp. (strain MR-7).